A 178-amino-acid polypeptide reads, in one-letter code: Oligoribonuclease (178 aa).

The 162-residue stretch at 7–168 (LIWIDLEMTG…DDIRESIAEL (162 aa)) folds into the Exonuclease domain. Residue tyrosine 128 is part of the active site.

This sequence belongs to the oligoribonuclease family.

The protein localises to the cytoplasm. 3'-to-5' exoribonuclease specific for small oligoribonucleotides. This Francisella tularensis subsp. novicida (strain U112) protein is Oligoribonuclease.